The following is a 94-amino-acid chain: Integration host factor subunit beta (94 aa).

This sequence belongs to the bacterial histone-like protein family. In terms of assembly, heterodimer of an alpha and a beta chain.

Its function is as follows. This protein is one of the two subunits of integration host factor, a specific DNA-binding protein that functions in genetic recombination as well as in transcriptional and translational control. In Ruegeria pomeroyi (strain ATCC 700808 / DSM 15171 / DSS-3) (Silicibacter pomeroyi), this protein is Integration host factor subunit beta.